Consider the following 197-residue polypeptide: ATP-dependent Clp protease proteolytic subunit (197 aa).

Ser98 (nucleophile) is an active-site residue. The active site involves His123.

This sequence belongs to the peptidase S14 family. In terms of assembly, fourteen ClpP subunits assemble into 2 heptameric rings which stack back to back to give a disk-like structure with a central cavity, resembling the structure of eukaryotic proteasomes.

The protein localises to the cytoplasm. The enzyme catalyses Hydrolysis of proteins to small peptides in the presence of ATP and magnesium. alpha-casein is the usual test substrate. In the absence of ATP, only oligopeptides shorter than five residues are hydrolyzed (such as succinyl-Leu-Tyr-|-NHMec, and Leu-Tyr-Leu-|-Tyr-Trp, in which cleavage of the -Tyr-|-Leu- and -Tyr-|-Trp bonds also occurs).. Its function is as follows. Cleaves peptides in various proteins in a process that requires ATP hydrolysis. Has a chymotrypsin-like activity. Plays a major role in the degradation of misfolded proteins. The sequence is that of ATP-dependent Clp protease proteolytic subunit from Natranaerobius thermophilus (strain ATCC BAA-1301 / DSM 18059 / JW/NM-WN-LF).